We begin with the raw amino-acid sequence, 37 residues long: Large ribosomal subunit protein bL36 (37 aa).

Belongs to the bacterial ribosomal protein bL36 family.

The protein is Large ribosomal subunit protein bL36 of Borreliella burgdorferi (strain ATCC 35210 / DSM 4680 / CIP 102532 / B31) (Borrelia burgdorferi).